The primary structure comprises 62 residues: Rhodotorucin-A peptides type 1 (62 aa).

A propeptide spanning residues 1-3 (MVA) is cleaved from the precursor. A lipid anchor (S-farnesyl cysteine) is attached at C14. Residues 15–18 (TVSK) constitute a propeptide that is removed on maturation. C29 carries S-farnesyl cysteine lipidation. The propeptide occupies 30 to 33 (TVSK). A lipid anchor (S-farnesyl cysteine) is attached at C44. The propeptide occupies 45–48 (TVSK). C59 is lipidated: S-farnesyl cysteine. The propeptide occupies 60 to 62 (TVA).

Its subcellular location is the cell membrane. In terms of biological role, rhodotorucin-A is a mating pheromone in cells of mating type A of Rhodosporidium toruloides. The sequence is that of Rhodotorucin-A peptides type 1 (RHA1) from Rhodotorula toruloides (Yeast).